A 710-amino-acid polypeptide reads, in one-letter code: Putative transmembrane protein ORF710 (710 aa).

The signal sequence occupies residues 1-33 (MKLDRKKKRLLLKTIFSIVILILPLTFLHPTNS). Helical transmembrane passes span 41–61 (VPIQIIYNYNVSGGVIYTAPL), 76–95 (YGTLLYSYLFSTNPAFVVWY), and 689–709 (VAIVSMAYGTKIWIGVFIFAI).

It is found in the host membrane. This is Putative transmembrane protein ORF710 from Acidianus convivator (ATV).